The following is a 552-amino-acid chain: Putative transport protein APJL_0985 (552 aa).

5 consecutive transmembrane segments (helical) span residues 4-24, 29-49, 65-85, 95-115, and 161-181; these read IAIIVSLLSLVAVLGLWIGHI, VGLGIGGVLFGGIIISHCTHL, FGLILFVYSIGIQVGPGFFAS, GFAVMIVGLSGILVALIHKLF, and IAYPFGIIGILLSMWLIRIIF. 2 consecutive RCK C-terminal domains span residues 190 to 275 and 277 to 360; these read QEFD…ILGE and ADVS…IIGD. A run of 6 helical transmembrane segments spans residues 370–390, 403–425, 438–458, 463–483, 492–512, and 529–549; these read MLPIFLGIGLGVLLGSLPLYL, GGPLVVALILARIGSIGKLYWFM, IVLFLSVVGLKAGANFLDTLL, LAWMGYGAIITFIPLIVTGFV, YLSLCGLLSGAMTDPPALAFA, and VYPLVMFLRIILPQLLAILLW.

This sequence belongs to the AAE transporter (TC 2.A.81) family. YidE subfamily.

It is found in the cell membrane. The protein is Putative transport protein APJL_0985 of Actinobacillus pleuropneumoniae serotype 3 (strain JL03).